Consider the following 98-residue polypeptide: NADH-ubiquinone oxidoreductase chain 4L (98 aa).

The next 3 helical transmembrane spans lie at 1-21 (MPVV…GLLI), 29-49 (SLLC…VTVL), and 61-81 (IILL…LVMV).

This sequence belongs to the complex I subunit 4L family. Core subunit of respiratory chain NADH dehydrogenase (Complex I) which is composed of 45 different subunits.

The protein resides in the mitochondrion inner membrane. The catalysed reaction is a ubiquinone + NADH + 5 H(+)(in) = a ubiquinol + NAD(+) + 4 H(+)(out). Core subunit of the mitochondrial membrane respiratory chain NADH dehydrogenase (Complex I) which catalyzes electron transfer from NADH through the respiratory chain, using ubiquinone as an electron acceptor. Part of the enzyme membrane arm which is embedded in the lipid bilayer and involved in proton translocation. The sequence is that of NADH-ubiquinone oxidoreductase chain 4L (MT-ND4L) from Ursus maritimus (Polar bear).